A 362-amino-acid polypeptide reads, in one-letter code: Probable cinnamyl alcohol dehydrogenase 8D (362 aa).

Residue Cys45 participates in Zn(2+) binding. Position 47 (Thr47) interacts with NADP(+). His67, Glu68, Cys98, Cys101, Cys104, Cys112, and Cys161 together coordinate Zn(2+). Residues Thr165, 186–191 (GLGGLG), 209–214 (SSSPAK), Thr249, Gly273, and 296–298 (NGV) each bind NADP(+).

Belongs to the zinc-containing alcohol dehydrogenase family. As to quaternary structure, homodimer. Zn(2+) serves as cofactor.

It catalyses the reaction (E)-cinnamyl alcohol + NADP(+) = (E)-cinnamaldehyde + NADPH + H(+). The catalysed reaction is (E)-coniferol + NADP(+) = (E)-coniferaldehyde + NADPH + H(+). It carries out the reaction (E)-sinapyl alcohol + NADP(+) = (E)-sinapaldehyde + NADPH + H(+). The enzyme catalyses (E)-4-coumaroyl alcohol + NADP(+) = (E)-4-coumaraldehyde + NADPH + H(+). It catalyses the reaction (E)-caffeyl alcohol + NADP(+) = (E)-caffeyl aldehyde + NADPH + H(+). Its pathway is aromatic compound metabolism; phenylpropanoid biosynthesis. Involved in lignin biosynthesis. Catalyzes the final step specific for the production of lignin monomers. Catalyzes the NADPH-dependent reduction of coniferaldehyde, 5-hydroxyconiferaldehyde, sinapaldehyde, 4-coumaraldehyde and caffeyl aldehyde to their respective alcohols. This chain is Probable cinnamyl alcohol dehydrogenase 8D, found in Oryza sativa subsp. japonica (Rice).